The following is an 896-amino-acid chain: Alanine--tRNA ligase (896 aa).

Residues 439–456 (QRAKDDAKAKKGQHRDAS) show a composition bias toward basic and acidic residues. The segment at 439-459 (QRAKDDAKAKKGQHRDASAYR) is disordered. 4 residues coordinate Zn(2+): His-579, His-583, Cys-681, and His-685.

Belongs to the class-II aminoacyl-tRNA synthetase family. It depends on Zn(2+) as a cofactor.

The protein resides in the cytoplasm. The enzyme catalyses tRNA(Ala) + L-alanine + ATP = L-alanyl-tRNA(Ala) + AMP + diphosphate. Functionally, catalyzes the attachment of alanine to tRNA(Ala) in a two-step reaction: alanine is first activated by ATP to form Ala-AMP and then transferred to the acceptor end of tRNA(Ala). Also edits incorrectly charged Ser-tRNA(Ala) and Gly-tRNA(Ala) via its editing domain. The sequence is that of Alanine--tRNA ligase from Nocardioides sp. (strain ATCC BAA-499 / JS614).